We begin with the raw amino-acid sequence, 1227 residues long: MPPLIESVVLQPLIAPIDPGFDGRRSRRIERRSFARIKDAIDLPLLIETQLKSFEWFKREGLRELFDEISPITDFTGKNLELHFREYTFGEPRYDEFECRDRDLTYAAPLRVKVELRILTTGEIKESEIFLGDFPMMTDNGTFVYNGAERVVVSQLIRSPGVYFKDEKDPTSGRALHTAKLIPNRGAWLEFETNKRDVISVKVDRKRKIPVTILLRAISAWIANEDGSGRWAPDNELDKYGHNEHLIELFRHVDTVAEHLYIQATIDKDPSHNAKEALLELYKRLRPGDPPTLENARTLIESLLFNPRRYDLAKVGRYKLNKNLWERDARRDGPKAPDLSVRVLLPRDIFRIVEQMILLNNGYGRPDDIDHLGNRRVRTVGELIQQQFRVGLLRLERVVKERMSLQDPASATPNGLINIRPVVAAMREFFGGSQLSQFMDQTNPLAELTNKRRLSALGPGGLSRDRAGFEVRDVHHSHYGRICPVETPEGPNIGLIGTMSTFARVNEMGFLETPYRKVYNSIDNAQVWREKGILLRDVRDLRTGDLIAAKGTRVDDQIARQITIGLLRGQILREDVVDPNTGELIAEAGTEINRALAERIVNLPMKQIKIRPVVSQEVDYLSADEEDRFVIVQANAPLDEHNRFLDTTVSCRFGEDFVTERVERVDYMDVSPKQVVSVSTSLIPFLEHDDANRALMGSNMQRQAVPLLRPDAPIVGTGMEYRTARDSGQVVVARRDGVVVSATGNRIIVEEDDGKRTEYRLRKFMRSNQDTCINQRPSVVRGQQVRAGDVIADSSSTDQGELALGQNVLVAYMPWEGGNFEDAILVSERLVREDIFTSIHIEKYEVEARDTKLGPEEITRDIPNVGQDSLRNLDERGIIYIGAEVQPNDILVGKITPKGETDLTAEERLLRAIFGEKAREVKDSSLRVPNGVRGKVIDVKVFSRSEGAELPVGVNQTVRVLLCQKRKISAGDKMAGRHGNKGVVSRVLPMEDMPFLPDGRPVDIILNPIGVPSRMNIGQILETHLGWAAARLGFRVATPVFDGAHEDQIKDLLVQAGLPADGKVTLYDGRTGEKFDHPVTVGYAYMLKLAHLVEDKIHARSTGPYSLVTQQPLGGKAQFGGQRFGEMEVWALEAYGAAYTLQEMLTVKSDDVVGRVKTYEAIVKGEPIQEAGVPESFKVLIKELQSLGLSVEVLSADEKPVELSDDLDSDIGALEGINLSGMERGEF.

The protein belongs to the RNA polymerase beta chain family. The RNAP catalytic core consists of 2 alpha, 1 beta, 1 beta' and 1 omega subunit. When a sigma factor is associated with the core the holoenzyme is formed, which can initiate transcription.

The catalysed reaction is RNA(n) + a ribonucleoside 5'-triphosphate = RNA(n+1) + diphosphate. In terms of biological role, DNA-dependent RNA polymerase catalyzes the transcription of DNA into RNA using the four ribonucleoside triphosphates as substrates. This Chloroflexus aggregans (strain MD-66 / DSM 9485) protein is DNA-directed RNA polymerase subunit beta.